The primary structure comprises 217 residues: Probable nicotinate-nucleotide adenylyltransferase (217 aa).

It belongs to the NadD family.

The enzyme catalyses nicotinate beta-D-ribonucleotide + ATP + H(+) = deamido-NAD(+) + diphosphate. The protein operates within cofactor biosynthesis; NAD(+) biosynthesis; deamido-NAD(+) from nicotinate D-ribonucleotide: step 1/1. Functionally, catalyzes the reversible adenylation of nicotinate mononucleotide (NaMN) to nicotinic acid adenine dinucleotide (NaAD). This chain is Probable nicotinate-nucleotide adenylyltransferase, found in Baumannia cicadellinicola subsp. Homalodisca coagulata.